The following is a 333-amino-acid chain: MSKFYDVIKPKASRPPVWFLRQVGRYMPQYRELKGSQTLKDFFHNTEAITEATLLGPSLLKVDAAILFADILSLLDGFNISYDFAPGPQISFSPKEELIFTNDPQDTFSYLLKAIKNLVKRLSVPLIAFAASPFTMACYLLEGGASKDFPKTMAFLYQHPERFDALLKQLAEATVIYLKEQIQAGASAIQLFESSSLRLPSALFSRYVTRPNTQLITQLKNSVSSPISLFCRCFDENFIDLYSTGADTLHPDYHVNLSQIYTAVTHPGSLQGNIDPALFLLPQDQFLNHLEKYLSVLKHQPKYIFNSGHGILPETPLENVQAAVLCLTSISTS.

Residues 21 to 25 (RQVGR), Asp70, Tyr139, Ser194, and His309 each bind substrate.

Belongs to the uroporphyrinogen decarboxylase family. In terms of assembly, homodimer.

The protein resides in the cytoplasm. The catalysed reaction is uroporphyrinogen III + 4 H(+) = coproporphyrinogen III + 4 CO2. It functions in the pathway porphyrin-containing compound metabolism; protoporphyrin-IX biosynthesis; coproporphyrinogen-III from 5-aminolevulinate: step 4/4. Catalyzes the decarboxylation of four acetate groups of uroporphyrinogen-III to yield coproporphyrinogen-III. The chain is Uroporphyrinogen decarboxylase from Chlamydia abortus (strain DSM 27085 / S26/3) (Chlamydophila abortus).